The chain runs to 228 residues: Ribosomal RNA small subunit methyltransferase G (228 aa).

Residues Gly89, Leu94, Val140–Glu141, and Arg159 contribute to the S-adenosyl-L-methionine site.

It belongs to the methyltransferase superfamily. RNA methyltransferase RsmG family.

It localises to the cytoplasm. It carries out the reaction guanosine(527) in 16S rRNA + S-adenosyl-L-methionine = N(7)-methylguanosine(527) in 16S rRNA + S-adenosyl-L-homocysteine. In terms of biological role, specifically methylates the N7 position of guanine in position 527 of 16S rRNA. The sequence is that of Ribosomal RNA small subunit methyltransferase G from Burkholderia ambifaria (strain MC40-6).